We begin with the raw amino-acid sequence, 422 residues long: Vitamin D3 receptor B (422 aa).

Positions 20–95 form a DNA-binding region, nuclear receptor; sequence PRICGVCGDK…IGMMKEFILT (76 aa). The Zn(2+) site is built by Cys-23, Cys-26, Cys-40, Cys-43, Cys-59, Cys-65, Cys-75, and Cys-78. 2 NR C4-type zinc fingers span residues 23–43 and 59–78; these read CGVCGDKATGFHFNAMTCEGC and CPFNGSCTITKDNRRHCQAC. A hinge region spans residues 96–125; the sequence is DEEVQRKKELIQRRKDEEAHREAQKPRLSD. Residues 106-128 form a disordered region; the sequence is IQRRKDEEAHREAQKPRLSDEQR. Residues 126 to 418 enclose the NR LBD domain; that stretch reads EQRNIIDTLV…LTPLVLEVFG (293 aa). Tyr-142 is a binding site for calcitriol. The interval 145–190 is disordered; that stretch reads SYSDFSRFRPPVREGPVTRSASRAASLHSLSDASSDSFSHSPESGD. Over residues 163-185 the composition is skewed to low complexity; the sequence is RSASRAASLHSLSDASSDSFSHS. Ser-234 contacts calcitriol. The interval 243-261 is interaction with coactivator LXXLL motif; that stretch reads KMIPGFRELTAEDQIALLK. The calcitriol site is built by Arg-271, Ser-275, His-302, and His-392. A 9aaTAD motif is present at residues 411–419; it reads PLVLEVFGG.

This sequence belongs to the nuclear hormone receptor family. As to quaternary structure, homodimer in the absence of bound vitamin D3. Heterodimer with RXRA after vitamin D3 binding. Interacts with ncoa1 and possibly other coactivators, leading to a strong increase of transcription of target genes. As to expression, detected in embryo 24 to 48 hours after fertilization, and in intestinal bulb.

The protein resides in the nucleus. It is found in the cytoplasm. Its function is as follows. Nuclear receptor for calcitriol, the active form of vitamin D3 which mediates the action of this vitamin on cells. Enters the nucleus upon vitamin D3 binding where it forms heterodimers with the retinoid X receptor/RXR. The VDR-RXR heterodimers bind to specific response elements on DNA and activate the transcription of vitamin D3-responsive target genes. Recruited to promoters via its interaction with BAZ1B/WSTF which mediates the interaction with acetylated histones, an essential step for VDR-promoter association. Plays a central role in calcium homeostasis. This is Vitamin D3 receptor B (vdrb) from Danio rerio (Zebrafish).